The primary structure comprises 443 residues: 2-hydroxyethylphosphonate dioxygenase (443 aa).

The region spanning 8 to 63 is the HTH cro/C1-type 1 domain; sequence LAHWMNARKYTAAQTADLAGLPLDDLRRLLGDEANEPDPAAATALAEALSVEPSQL. Residue Lys-16 coordinates substrate. The segment at residues 19–38 is a DNA-binding region (H-T-H motif); that stretch reads AAQTADLAGLPLDDLRRLLG. Substrate-binding residues include Tyr-98 and Asn-126. His-129 lines the Fe cation pocket. 3 residues coordinate substrate: Glu-176, His-182, and Ser-196. His-182 is a binding site for Fe cation. One can recognise an HTH cro/C1-type 2 domain in the interval 234–290; the sequence is VLDLFLARRAHTRTSAAEAAGVPPADLEAALRSPASETGLTVLRTLGRALGFDYRVL. Residues 245–265 constitute a DNA-binding region (H-T-H motif); it reads TRTSAAEAAGVPPADLEAALR.

The protein belongs to the non-heme iron-dependent dioxygenase family. Homodimer. The cofactor is Fe(2+).

It carries out the reaction 2-hydroxyethylphosphonate + O2 = hydroxymethylphosphonate + formate + H(+). It functions in the pathway secondary metabolite biosynthesis; bialaphos biosynthesis. Its function is as follows. Non-heme-dependent dioxygenase that catalyzes the conversion of 2-hydroxyethylphosphonate (HEP) to hydroxymethylphosphonate (HMP) in the biosynthesis of phosphinothricin tripeptide (PTT), also known as bialaphos (BA), a natural-product antibiotic and potent herbicide. PTT contains the unusual amino acid phosphinothricin attached to 2 alanine residues. Synthetic phosphinothricin (glufosinate) is a key component of commercial herbicides. In Streptomyces viridochromogenes (strain DSM 40736 / JCM 4977 / BCRC 1201 / Tue 494), this protein is 2-hydroxyethylphosphonate dioxygenase (hepD).